Here is a 336-residue protein sequence, read N- to C-terminus: UPF0065 protein in tcbD-tcbE intergenic region (336 aa).

The signal sequence occupies residues M1 to A32.

It belongs to the UPF0065 (bug) family.

The protein localises to the periplasm. The polypeptide is UPF0065 protein in tcbD-tcbE intergenic region (Pseudomonas sp. (strain P51)).